The sequence spans 569 residues: Proline--tRNA ligase (569 aa).

This sequence belongs to the class-II aminoacyl-tRNA synthetase family. ProS type 1 subfamily. In terms of assembly, homodimer.

Its subcellular location is the cytoplasm. It carries out the reaction tRNA(Pro) + L-proline + ATP = L-prolyl-tRNA(Pro) + AMP + diphosphate. In terms of biological role, catalyzes the attachment of proline to tRNA(Pro) in a two-step reaction: proline is first activated by ATP to form Pro-AMP and then transferred to the acceptor end of tRNA(Pro). As ProRS can inadvertently accommodate and process non-cognate amino acids such as alanine and cysteine, to avoid such errors it has two additional distinct editing activities against alanine. One activity is designated as 'pretransfer' editing and involves the tRNA(Pro)-independent hydrolysis of activated Ala-AMP. The other activity is designated 'posttransfer' editing and involves deacylation of mischarged Ala-tRNA(Pro). The misacylated Cys-tRNA(Pro) is not edited by ProRS. The polypeptide is Proline--tRNA ligase (Campylobacter jejuni subsp. jejuni serotype O:2 (strain ATCC 700819 / NCTC 11168)).